Consider the following 124-residue polypeptide: Profilin-2 (124 aa).

Belongs to the profilin family. As to quaternary structure, occurs in many kinds of cells as a complex with monomeric actin in a 1:1 ratio. Interacts with forH.

The protein resides in the cytoplasm. The protein localises to the cytoskeleton. Its function is as follows. Binds to actin and affects the structure of the cytoskeleton. At high concentrations, profilin prevents the polymerization of actin, whereas it enhances it at low concentrations. By binding to PIP2, it inhibits the formation of IP3 and DG. The polypeptide is Profilin-2 (proB) (Dictyostelium discoideum (Social amoeba)).